The primary structure comprises 252 residues: MITKRIIPCLDVKDGRVVKGVQFVQLRDAGDPVELAKFYDKQGADELVFLDISASHEGRKTMVEVVEKVAAQLAIPFTVGGGINSLDDMKTILRAGADKVSLNTAAVRNPNLITEGADFFGSQCIVVAIDAKYDETIGSWRVYTHGGRNATDLEVVEWAKEAVRRGAGEILLTSMDCDGEKNGFDIALTRTVSEAVSVPVIASGGAGNAKHFLEVFEKGKADAALAASIFHYKETSVKEVKAYLKERGVNIR.

Catalysis depends on residues D11 and D130.

The protein belongs to the HisA/HisF family. In terms of assembly, heterodimer of HisH and HisF.

It localises to the cytoplasm. The catalysed reaction is 5-[(5-phospho-1-deoxy-D-ribulos-1-ylimino)methylamino]-1-(5-phospho-beta-D-ribosyl)imidazole-4-carboxamide + L-glutamine = D-erythro-1-(imidazol-4-yl)glycerol 3-phosphate + 5-amino-1-(5-phospho-beta-D-ribosyl)imidazole-4-carboxamide + L-glutamate + H(+). The protein operates within amino-acid biosynthesis; L-histidine biosynthesis; L-histidine from 5-phospho-alpha-D-ribose 1-diphosphate: step 5/9. Functionally, IGPS catalyzes the conversion of PRFAR and glutamine to IGP, AICAR and glutamate. The HisF subunit catalyzes the cyclization activity that produces IGP and AICAR from PRFAR using the ammonia provided by the HisH subunit. The sequence is that of Imidazole glycerol phosphate synthase subunit HisF from Geobacillus sp. (strain WCH70).